We begin with the raw amino-acid sequence, 98 residues long: Feather keratin 3 (98 aa).

This sequence belongs to the avian keratin family. As to quaternary structure, the avian keratins (F-ker, S-ker, C-ker and B-ker) are a complex mixture of very similar polypeptides.

In Gallus gallus (Chicken), this protein is Feather keratin 3.